The primary structure comprises 61 residues: Bactericidin B-5P (61 aa).

Positions 1-22 (MNFSRVLFFVFACLSAFAMASA) are cleaved as a signal peptide. Positions 23–24 (AP) are cleaved as a propeptide — removed by a dipeptidylpeptidase. Glycine amide is present on Gly60.

The protein belongs to the cecropin family.

It is found in the secreted. Cecropins have lytic and antibacterial activity against several Gram-positive and Gram-negative bacteria. This Manduca sexta (Tobacco hawkmoth) protein is Bactericidin B-5P.